A 201-amino-acid polypeptide reads, in one-letter code: Pyridoxal 5'-phosphate synthase subunit PdxT (201 aa).

Gly49 to Ser51 is an L-glutamine binding site. Cys81 (nucleophile) is an active-site residue. L-glutamine is bound by residues Arg110 and Ile139 to Arg140. Residues His180 and Glu182 each act as charge relay system in the active site.

It belongs to the glutaminase PdxT/SNO family. In terms of assembly, in the presence of PdxS, forms a dodecamer of heterodimers. Only shows activity in the heterodimer.

The catalysed reaction is aldehydo-D-ribose 5-phosphate + D-glyceraldehyde 3-phosphate + L-glutamine = pyridoxal 5'-phosphate + L-glutamate + phosphate + 3 H2O + H(+). It carries out the reaction L-glutamine + H2O = L-glutamate + NH4(+). Its pathway is cofactor biosynthesis; pyridoxal 5'-phosphate biosynthesis. Functionally, catalyzes the hydrolysis of glutamine to glutamate and ammonia as part of the biosynthesis of pyridoxal 5'-phosphate. The resulting ammonia molecule is channeled to the active site of PdxS. In Salinispora tropica (strain ATCC BAA-916 / DSM 44818 / JCM 13857 / NBRC 105044 / CNB-440), this protein is Pyridoxal 5'-phosphate synthase subunit PdxT.